A 523-amino-acid polypeptide reads, in one-letter code: Effector protein hopAB1 (523 aa).

Disordered regions lie at residues 1-94 (MPGI…EAQQ), 165-223 (VRQQ…QGLD), and 299-320 (RQTTTNSPELPPLASSAESGRR). A compositionally biased stretch (basic and acidic residues) spans 18-31 (TDGEPVTEREHDSS). Positions 181-194 (SSSGSSQRSLIGRS) are enriched in low complexity.

It belongs to the HopAB family.

It localises to the secreted. Effector protein that plays different roles depending on the species and plant cultivars that interact with the pathogen. Acts as a virulence determinant by enhancing the development of disease symptoms and bacterial growth. Acts as an avirulence factor by eliciting hypersensitive response (HR) and plant resistance. The polypeptide is Effector protein hopAB1 (hopAB1) (Pseudomonas savastanoi pv. glycinea (Pseudomonas syringae pv. glycinea)).